The primary structure comprises 210 residues: Outer-membrane lipoprotein carrier protein (210 aa).

The first 22 residues, 1-22, serve as a signal peptide directing secretion; that stretch reads MRAFKWALAIGATLALPLTAQA.

The protein belongs to the LolA family. In terms of assembly, monomer.

It is found in the periplasm. In terms of biological role, participates in the translocation of lipoproteins from the inner membrane to the outer membrane. Only forms a complex with a lipoprotein if the residue after the N-terminal Cys is not an aspartate (The Asp acts as a targeting signal to indicate that the lipoprotein should stay in the inner membrane). In Chromohalobacter salexigens (strain ATCC BAA-138 / DSM 3043 / CIP 106854 / NCIMB 13768 / 1H11), this protein is Outer-membrane lipoprotein carrier protein.